Here is a 204-residue protein sequence, read N- to C-terminus: Uridylate kinase (204 aa).

An ATP-binding site is contributed by 26–31 (GAGKGT). Residues 46-76 (SAGDLLRAEQGRAGSQYGELIKNCIKEGQIV) form an NMP region. A ribonucleoside 5'-phosphate contacts are provided by residues Arg52, 74–76 (QIV), 104–107 (GFPR), and Gln111. The interval 141-151 (ERGKTSGRSDD) is LID. Arg142 serves as a coordination point for ATP. Arg148 and Arg159 together coordinate a ribonucleoside 5'-phosphate. Arg187 contacts ATP.

This sequence belongs to the adenylate kinase family. UMP-CMP kinase subfamily. In terms of assembly, monomer. Requires Mg(2+) as cofactor.

It localises to the cytoplasm. The protein localises to the nucleus. It carries out the reaction UMP + ATP = UDP + ADP. In terms of biological role, catalyzes the phosphorylation of pyrimidine nucleoside monophosphates at the expense of ATP. Plays an important role in de novo pyrimidine nucleotide biosynthesis. Has preference for UMP and dUMP as phosphate acceptors, but can also use CMP, dCMP, AMP, GMP, dGMP and dTMP. ATP and dATP are the best phosphate donors, but can also use GTP, dGTP, dCTP, and dTTP to some degree. This is Uridylate kinase from Saccharomyces cerevisiae (strain ATCC 204508 / S288c) (Baker's yeast).